The primary structure comprises 114 residues: Iron-sulfur cluster insertion protein ErpA (114 aa).

Iron-sulfur cluster-binding residues include C42, C106, and C108.

Belongs to the HesB/IscA family. Homodimer. The cofactor is iron-sulfur cluster.

Functionally, required for insertion of 4Fe-4S clusters for at least IspG. This is Iron-sulfur cluster insertion protein ErpA from Sodalis glossinidius (strain morsitans).